Here is a 208-residue protein sequence, read N- to C-terminus: Large ribosomal subunit protein uL4 (208 aa).

Residues 45-84 (RQGTHKVKNRSEVRGGGKKPYRQKGTGHARQGSSRSGLMS) are disordered. Residues 60 to 71 (GGKKPYRQKGTG) are compositionally biased toward basic residues.

The protein belongs to the universal ribosomal protein uL4 family. As to quaternary structure, part of the 50S ribosomal subunit.

In terms of biological role, one of the primary rRNA binding proteins, this protein initially binds near the 5'-end of the 23S rRNA. It is important during the early stages of 50S assembly. It makes multiple contacts with different domains of the 23S rRNA in the assembled 50S subunit and ribosome. Forms part of the polypeptide exit tunnel. The chain is Large ribosomal subunit protein uL4 from Prosthecochloris aestuarii (strain DSM 271 / SK 413).